An 828-amino-acid polypeptide reads, in one-letter code: MLIPYSPHTIWKTICATLLLSLAFFSQAEQDDSVEFNIHMLDAEDRDNVDLSRFSTSNYIIPGMYYLDIRLNGRDFPRQNINYIEVADNHSVACIDPTLLKKLTINQENQKYIKQISPDCFDISQLPGISIKNDGGVLDITLPRSLMKYEESDWTPPELWDSGVSGLIFDYTLTGTSTRPNKGNNNNTLTGYGQAGLNLGEWRLRAEYQGNYSSEYSSNNRFDWNQIYAYKPLPDLAAKLTVGETYLNSQIFDSFRFTGANLQSDERMLPPSLQGYAPEIHGIANTNAKVTVTQNGRLIYETTVPAGPFVINHLQNTVQGQLDVRVEEQNGKINEFQVQTANLPYMTRPGSVRFNTSLGQSSVNNHKMQGPLFYQGDFSWGMNNTWSLYGGTLLTAKDYNAWSLGIGHDMGRFGTLSGDITQSYSKTYDNEKINGMSFKLNYAKTFDEYHSTITFAGYRFSEKTFRSFSQYIDERYNGINNNGYEKEMYTITGNKTFWADDAEKSTTLYLSYRHQNYWDKNTQEQYGVTVSRNFSIMGIEQINTNLSAFRTQYKGNTDDTLSFNISLPLGSGRNIGYNLQDNNGKVTQMASYADNRDYNNLWRIRAGLSSDKKANTDGYYQHRSQYAEINANASYQQDNYLAVGATIKGGFTATRYGAALHSSSMTSSTARIMVDTDGVAGVPFNGQSTTTNRFGIGVLTDLTSYNNVDARIDVDKMDQDIETRKAIASTTLTEGAIGYYQFPVRQGERLMAVLQTTDNKYPPFGAEVTNQKGESIGMVMEEGLVYIAGVNLNESLNVIWNGKTQCSITIPAEITDPLKHQSLVCQDR.

An N-terminal signal peptide occupies residues 1–28; that stretch reads MLIPYSPHTIWKTICATLLLSLAFFSQA.

This sequence belongs to the fimbrial export usher family.

The protein localises to the cell outer membrane. Its function is as follows. Involved in the export and assembly of PMF fimbrial subunits across the outer membrane. The sequence is that of Outer membrane usher protein PmfC (pmfC) from Proteus mirabilis (strain HI4320).